Reading from the N-terminus, the 864-residue chain is A-kinase anchor protein 3 (864 aa).

Position 12 is a phosphoserine; by STK33 (Ser-12). The tract at residues 125–138 (VSFYANRLTNLVIA) is PKA-RII subunit binding domain. 2 disordered regions span residues 190–235 (NISS…DKPG) and 251–281 (AGDA…DFSN). Residues 204–218 (SGSSQAPGLRYTSTL) show a composition bias toward polar residues. Ser-206 carries the phosphoserine modification. The span at 219 to 235 (KIKESTKEGKCPDDKPG) shows a compositional bias: basic and acidic residues. The residue at position 405 (Ser-405) is a Phosphoserine. Tyr-406 is modified (phosphotyrosine). Positions 619–638 (VHEQNTQEEEIHPCERPKTP) are disordered. The span at 627–638 (EEIHPCERPKTP) shows a compositional bias: basic and acidic residues.

Belongs to the AKAP110 family. As to quaternary structure, interacts with ROPN1 and ROPN1L. Interacts with QRICH2. In terms of processing, phosphorylated by STK33 during sperm flagella assembly. Phosphorylated on tyrosine.

It is found in the cytoplasmic vesicle. The protein localises to the secretory vesicle. Its subcellular location is the acrosome. It localises to the cell projection. The protein resides in the cilium. It is found in the flagellum. Its function is as follows. Structural component of sperm fibrous sheath. Required for the formation of the subcellular structure of the sperm flagellum, sperm motility and male fertility. In Mus musculus (Mouse), this protein is A-kinase anchor protein 3.